Consider the following 203-residue polypeptide: Holliday junction branch migration complex subunit RuvA (203 aa).

The segment at 1–64 is domain I; that stretch reads MIGRLNGILV…EDAQLLYGFI (64 aa). Residues 65–143 are domain II; sequence TKQERALFRL…SLLEASVGNE (79 aa). The segment at 144 to 154 is flexible linker; that stretch reads REFMLQTNYTA. The interval 155-203 is domain III; sequence PAANAEEDAISALVSLGYKPPQASRAVSKAYKEGMDTETLIKLALKSML.

It belongs to the RuvA family. As to quaternary structure, homotetramer. Forms an RuvA(8)-RuvB(12)-Holliday junction (HJ) complex. HJ DNA is sandwiched between 2 RuvA tetramers; dsDNA enters through RuvA and exits via RuvB. An RuvB hexamer assembles on each DNA strand where it exits the tetramer. Each RuvB hexamer is contacted by two RuvA subunits (via domain III) on 2 adjacent RuvB subunits; this complex drives branch migration. In the full resolvosome a probable DNA-RuvA(4)-RuvB(12)-RuvC(2) complex forms which resolves the HJ.

It localises to the cytoplasm. Functionally, the RuvA-RuvB-RuvC complex processes Holliday junction (HJ) DNA during genetic recombination and DNA repair, while the RuvA-RuvB complex plays an important role in the rescue of blocked DNA replication forks via replication fork reversal (RFR). RuvA specifically binds to HJ cruciform DNA, conferring on it an open structure. The RuvB hexamer acts as an ATP-dependent pump, pulling dsDNA into and through the RuvAB complex. HJ branch migration allows RuvC to scan DNA until it finds its consensus sequence, where it cleaves and resolves the cruciform DNA. The sequence is that of Holliday junction branch migration complex subunit RuvA from Shewanella denitrificans (strain OS217 / ATCC BAA-1090 / DSM 15013).